The primary structure comprises 417 residues: Cell division protein FtsA (417 aa).

Belongs to the FtsA/MreB family. Self-interacts. Interacts with FtsZ.

It is found in the cell inner membrane. Its function is as follows. Cell division protein that is involved in the assembly of the Z ring. May serve as a membrane anchor for the Z ring. The protein is Cell division protein FtsA of Pseudomonas aeruginosa (strain ATCC 15692 / DSM 22644 / CIP 104116 / JCM 14847 / LMG 12228 / 1C / PRS 101 / PAO1).